We begin with the raw amino-acid sequence, 394 residues long: MFLLKIKKERMKRMDFSLTREQEMLKKLARQFAEIELEPVAEEIDREHVFPAENFKKMAEIGLTGIGIPKEFGGSGGGTLEKVIAVSEFGKKCMASASILSIHLIAPQAIYKYGTKEQKETYLPRLTKGGELGAFALTEPNAGSDAGAVKTTAILDSQTNEYVLNGTKCFISGGGRAGVLVIFALTEPKKGLKGMSAIIVEKGTPGFSIGKVESKMGIAGSETAELIFEDCRVPAANLLGKEGKGFKIAMEALDGARIGVGAQAIGIAEGAIDLSVKYVHERIQFGKPIANLQGIQWYIADMATKTAAARALVEFAAYLEDAGKPFTKESAMCKLNASENARFVTNLALQIHGGYGYMKDYPLERMYRDAKITEIYEGTSEIHKVVIAREVMKR.

FAD is bound by residues 135 to 144 and 170 to 172; these read FALTEPNAGS and FIS. Residue Ser144 participates in substrate binding. 254–257 provides a ligand contact to substrate; it reads DGAR. FAD-binding positions include Arg282, Gln293, and 350–354; that span reads QIHGG. The active-site Proton acceptor is the Glu377. Substrate is bound at residue Gly378. 379–381 provides a ligand contact to FAD; sequence TSE.

Heterohexadecamer; tetramer of tetramers. Each tetramer is composed of 2 alpha (AcrC), a beta (AcrA) and a gamma (AcrB) subunit. The cofactor is FAD.

It localises to the cytoplasm. It catalyses the reaction propanoyl-CoA + NAD(+) = acryloyl-CoA + NADH + H(+). In terms of biological role, probable catalytic subunit of the acryloyl-CoA reductase complex involved in the pathway of L-alanine fermentation. Catalyzes the irreversible NADH-dependent formation of propionyl-CoA from acryloyl-CoA. It can also use 3-buten-2-one as substrate. In Anaerotignum propionicum (Clostridium propionicum), this protein is Acryloyl-CoA reductase (NADH) (acrC).